The chain runs to 407 residues: Bifunctional enzyme IspD/IspF (407 aa).

Residues 1-246 (MTEASENASA…SSERTHFPDI (246 aa)) form a 2-C-methyl-D-erythritol 4-phosphate cytidylyltransferase region. A 2-C-methyl-D-erythritol 2,4-cyclodiphosphate synthase region spans residues 247–407 (RTGNGYDVHA…SVVFPGEVPE (161 aa)). Asp253 and His255 together coordinate a divalent metal cation. 4-CDP-2-C-methyl-D-erythritol 2-phosphate is bound by residues 253 to 255 (DVH) and 279 to 280 (HS). A divalent metal cation is bound at residue His287. Residues 301–303 (DIG), 377–380 (TTNE), Phe384, and Arg387 each bind 4-CDP-2-C-methyl-D-erythritol 2-phosphate.

The protein in the N-terminal section; belongs to the IspD/TarI cytidylyltransferase family. IspD subfamily. It in the C-terminal section; belongs to the IspF family. It depends on a divalent metal cation as a cofactor.

The enzyme catalyses 2-C-methyl-D-erythritol 4-phosphate + CTP + H(+) = 4-CDP-2-C-methyl-D-erythritol + diphosphate. It catalyses the reaction 4-CDP-2-C-methyl-D-erythritol 2-phosphate = 2-C-methyl-D-erythritol 2,4-cyclic diphosphate + CMP. It functions in the pathway isoprenoid biosynthesis; isopentenyl diphosphate biosynthesis via DXP pathway; isopentenyl diphosphate from 1-deoxy-D-xylulose 5-phosphate: step 2/6. Its pathway is isoprenoid biosynthesis; isopentenyl diphosphate biosynthesis via DXP pathway; isopentenyl diphosphate from 1-deoxy-D-xylulose 5-phosphate: step 4/6. In terms of biological role, bifunctional enzyme that catalyzes the formation of 4-diphosphocytidyl-2-C-methyl-D-erythritol from CTP and 2-C-methyl-D-erythritol 4-phosphate (MEP) (IspD), and catalyzes the conversion of 4-diphosphocytidyl-2-C-methyl-D-erythritol 2-phosphate (CDP-ME2P) to 2-C-methyl-D-erythritol 2,4-cyclodiphosphate (ME-CPP) with a corresponding release of cytidine 5-monophosphate (CMP) (IspF). In Mesorhizobium japonicum (strain LMG 29417 / CECT 9101 / MAFF 303099) (Mesorhizobium loti (strain MAFF 303099)), this protein is Bifunctional enzyme IspD/IspF.